A 383-amino-acid chain; its full sequence is Glutamate 5-kinase (383 aa).

Position 17 (Lys-17) interacts with ATP. Positions 64, 151, and 165 each coordinate substrate. 185–186 provides a ligand contact to ATP; sequence SD. The PUA domain occupies 291 to 367; that stretch reads SGTIRVDAGA…DEIEGILGYN (77 aa).

Belongs to the glutamate 5-kinase family.

The protein localises to the cytoplasm. The enzyme catalyses L-glutamate + ATP = L-glutamyl 5-phosphate + ADP. It functions in the pathway amino-acid biosynthesis; L-proline biosynthesis; L-glutamate 5-semialdehyde from L-glutamate: step 1/2. In terms of biological role, catalyzes the transfer of a phosphate group to glutamate to form L-glutamate 5-phosphate. The polypeptide is Glutamate 5-kinase (Methanosarcina barkeri (strain Fusaro / DSM 804)).